A 192-amino-acid chain; its full sequence is Intraflagellar transport protein 22 (192 aa).

GTP-binding positions include 12-19 and 62-69; these read GPQRTGKT and WDVSGSVQ.

This sequence belongs to the small GTPase superfamily. Rab family. In terms of assembly, component of the IFT complex B, composed of IFT88, IFT70, IFT52, IFT46, IFT27, IFT25 and IFT22.

Its subcellular location is the cell projection. It is found in the cilium. It localises to the flagellum. Component of the intraflagellar transport (IFT) complex B. Functions in regulating the cellular pool size of both complex A and complex B and thus plays a critical role in determining the cellular availability of IFT particles. In Chlamydomonas reinhardtii (Chlamydomonas smithii), this protein is Intraflagellar transport protein 22 (FAP9).